Here is a 332-residue protein sequence, read N- to C-terminus: NADH-quinone oxidoreductase subunit H (332 aa).

A run of 9 helical transmembrane segments spans residues 4-24, 44-64, 78-98, 120-140, 165-185, 194-214, 255-275, 279-299, and 312-332; these read FAFF…IFAS, IGPD…MIKL, FIFA…LAAI, VALL…FLGG, VGAL…LVDI, FSWL…ALFI, IAGA…FWII, IMMI…RAAF, and YLIL…TVLL.

The protein belongs to the complex I subunit 1 family. In terms of assembly, NDH-1 is composed of 14 different subunits. Subunits NuoA, H, J, K, L, M, N constitute the membrane sector of the complex.

It is found in the cell inner membrane. The catalysed reaction is a quinone + NADH + 5 H(+)(in) = a quinol + NAD(+) + 4 H(+)(out). NDH-1 shuttles electrons from NADH, via FMN and iron-sulfur (Fe-S) centers, to quinones in the respiratory chain. The immediate electron acceptor for the enzyme in this species is believed to be ubiquinone. Couples the redox reaction to proton translocation (for every two electrons transferred, four hydrogen ions are translocated across the cytoplasmic membrane), and thus conserves the redox energy in a proton gradient. This subunit may bind ubiquinone. The protein is NADH-quinone oxidoreductase subunit H of Campylobacter jejuni subsp. jejuni serotype O:23/36 (strain 81-176).